A 553-amino-acid polypeptide reads, in one-letter code: MLSVRIAAAVARALPRRAGLVSKNALGSSFVGTRNLHASNTRLQKTGTAEMSSILEERILGADTSVDLEETGRVLSIGDGIARVHGLRNVQAEEMVEFSSGLKGMSLNLEPDNVGVVVFGNDKLIKEGDIVKRTGAIVDVPVGDELLGRVVDALGNAIDGKGPVGSKIRRRVGLKAPGIIPRISVREPMQTGIKAVDSLVPIGRGQRELIIGDRQTGKTSIAIDTIINQKRFNDGTDEKKKLYCIYVAIGQKRSTVAQLVKRLTDADAMKYTIVVSATASDAAPLQYLAPYSGCSMGEYFRDNGKHALIIYDDLSKQAVAYRQMSLLLRRPPGREAYPGDVFYLHSRLLERAAKMNDSFGGGSLTALPVIETQAGDVSAYIPTNVISITDGQIFLETELFYKGIRPAINVGLSVSRVGSAAQTRAMKQVAGTMKLELAQYREVAAFAQFGSDLDAATQQLLSRGVRLTELLKQGQYSPMAIEEQVAVIYAGVRGYLDKLEPSKITKFESAFLSHVVSQHQSLLGNIRSDGKISEQSDAKLKEIVTNFLAGFEP.

Residues methionine 1–leucine 43 constitute a mitochondrion transit peptide. Phosphoserine is present on residues serine 53 and serine 65. Serine 76 is subject to Phosphoserine; alternate. O-linked (GlcNAc) serine; alternate glycosylation is present at serine 76. Phosphoserine is present on serine 106. N6-acetyllysine occurs at positions 123, 126, and 132. Position 134 is a phosphothreonine (threonine 134). Lysine 161 is modified (N6-acetyllysine; alternate). Residue lysine 161 is modified to N6-succinyllysine; alternate. Serine 166 carries the phosphoserine modification. At lysine 167 the chain carries N6-acetyllysine; alternate. Lysine 167 carries the post-translational modification N6-succinyllysine; alternate. Residue serine 184 is modified to Phosphoserine. Omega-N-methylarginine is present on arginine 204. ATP is bound by residues glutamine 215, glycine 217, lysine 218, threonine 219, and serine 220. Threonine 219 provides a ligand contact to Mg(2+). Residues lysine 230 and lysine 239 each carry the N6-acetyllysine; alternate modification. N6-succinyllysine; alternate is present on residues lysine 230 and lysine 239. At lysine 240 the chain carries N6-acetyllysine. N6-acetyllysine; alternate occurs at positions 261 and 305. 2 positions are modified to N6-succinyllysine; alternate: lysine 261 and lysine 305. Aspartate 312 serves as a coordination point for Mg(2+). Position 427 is an N6-acetyllysine; alternate (lysine 427). Lysine 427 is subject to N6-succinyllysine; alternate. Lysine 434 carries the N6-acetyllysine modification. Residues glutamine 473 and glutamine 475 each contribute to the ATP site. N6-acetyllysine; alternate is present on residues lysine 498, lysine 506, lysine 531, and lysine 539. N6-succinyllysine; alternate is present on residues lysine 498, lysine 506, lysine 531, and lysine 539. Lysine 541 carries the N6-acetyllysine modification.

The protein belongs to the ATPase alpha/beta chains family. As to quaternary structure, homotrimer. Component of the ATP synthase complex composed at least of ATP5F1A/subunit alpha, ATP5F1B/subunit beta, ATP5MC1/subunit c (homooctomer), MT-ATP6/subunit a, MT-ATP8/subunit 8, ATP5ME/subunit e, ATP5MF/subunit f, ATP5MG/subunit g, ATP5MK/subunit k, ATP5MJ/subunit j, ATP5F1C/subunit gamma, ATP5F1D/subunit delta, ATP5F1E/subunit epsilon, ATP5PF/subunit F6, ATP5PB/subunit b, ATP5PD/subunit d, ATP5PO/subunit OSCP. ATP synthase complex consists of a soluble F(1) head domain (subunits alpha(3) and beta(3)) - the catalytic core - and a membrane F(0) domain - the membrane proton channel (subunits c, a, 8, e, f, g, k and j). These two domains are linked by a central stalk (subunits gamma, delta, and epsilon) rotating inside the F1 region and a stationary peripheral stalk (subunits F6, b, d, and OSCP). Interacts with ATPAF2. Interacts with HRG; the interaction occurs on the surface of T-cells and alters the cell morphology when associated with concanavalin (in vitro). Interacts with PLG (angiostatin peptide); the interaction inhibits most of the angiogenic properties of angiostatin. Interacts with BLOC1S1. Interacts with BCL2L1 isoform BCL-X(L); the interaction mediates the association of BCL2L1 isoform BCL-X(L) with the mitochondrial membrane F(1)F(0) ATP synthase and enhances neurons metabolic efficiency. Interacts with CLN5 and PPT1. Interacts with S100A1; this interaction increases F1-ATPase activity. Interacts with ABCB7; this interaction allows the regulation of cellular iron homeostasis and cellular reactive oxygen species (ROS) levels in cardiomyocytes. Post-translationally, acetylated on lysine residues. BLOC1S1 is required for acetylation. Expressed in flagella of epididymal sperm.

The protein localises to the mitochondrion. It is found in the mitochondrion inner membrane. Its subcellular location is the cell membrane. Subunit alpha, of the mitochondrial membrane ATP synthase complex (F(1)F(0) ATP synthase or Complex V) that produces ATP from ADP in the presence of a proton gradient across the membrane which is generated by electron transport complexes of the respiratory chain. ATP synthase complex consist of a soluble F(1) head domain - the catalytic core - and a membrane F(1) domain - the membrane proton channel. These two domains are linked by a central stalk rotating inside the F(1) region and a stationary peripheral stalk. During catalysis, ATP synthesis in the catalytic domain of F(1) is coupled via a rotary mechanism of the central stalk subunits to proton translocation. In vivo, can only synthesize ATP although its ATP hydrolase activity can be activated artificially in vitro. With the catalytic subunit beta (ATP5F1B), forms the catalytic core in the F(1) domain. Subunit alpha does not bear the catalytic high-affinity ATP-binding sites. The chain is ATP synthase F(1) complex subunit alpha, mitochondrial from Rattus norvegicus (Rat).